Here is a 766-residue protein sequence, read N- to C-terminus: Oligopeptide transporter 7 (766 aa).

A disordered region spans residues 1 to 58 (MEESEQVLPLLTNPKDLTNPSYASSSSSSSEPRDETEDLLLPISDENEEEEEENSPIR). A compositionally biased stretch (acidic residues) spans 45–54 (DENEEEEEEN). 15 consecutive transmembrane segments (helical) span residues 79–99 (MWVL…FFWY), 104–124 (LTIS…LMAA), 154–174 (ITIF…VTVV), 184–204 (FFVS…WAGI), 247–267 (FVIA…LFQI), 287–307 (IGSG…STIS), 324–344 (VGVG…WLDV), 390–410 (LCTF…ATIM), 446–466 (VPEW…IFAC), 477–497 (WWGV…IGII), 509–529 (IITE…NMCF), 561–581 (FMAQ…TAWW), 627–647 (LYKS…LVWL), 676–696 (ATAV…FVVF), and 709–729 (VLSG…YMCL).

The protein belongs to the oligopeptide OPT transporter (TC 2.A.67.1) family. As to expression, expressed in the major and the first-order veins and in the hydathodes of the leaves. In the roots, expressed in circular zones surrounding lateral root primordia and in some part of the root epidermis. Expressed also in the sepals and the cortical tissues of the stem, but not in the conducting bundles, the petals or the reproductive tissues.

It localises to the membrane. Its function is as follows. Involved in the translocation of tetra- and pentapeptides across the cellular membrane in an energy-dependent manner. May also transport cadmium complexes. In Arabidopsis thaliana (Mouse-ear cress), this protein is Oligopeptide transporter 7 (OPT7).